The primary structure comprises 358 residues: UDP-N-acetylglucosamine--N-acetylmuramyl-(pentapeptide) pyrophosphoryl-undecaprenol N-acetylglucosamine transferase (358 aa).

Residues 11–13 (TGG), N120, R161, S188, and Q282 each bind UDP-N-acetyl-alpha-D-glucosamine.

It belongs to the glycosyltransferase 28 family. MurG subfamily.

It is found in the cell inner membrane. The enzyme catalyses di-trans,octa-cis-undecaprenyl diphospho-N-acetyl-alpha-D-muramoyl-L-alanyl-D-glutamyl-meso-2,6-diaminopimeloyl-D-alanyl-D-alanine + UDP-N-acetyl-alpha-D-glucosamine = di-trans,octa-cis-undecaprenyl diphospho-[N-acetyl-alpha-D-glucosaminyl-(1-&gt;4)]-N-acetyl-alpha-D-muramoyl-L-alanyl-D-glutamyl-meso-2,6-diaminopimeloyl-D-alanyl-D-alanine + UDP + H(+). The protein operates within cell wall biogenesis; peptidoglycan biosynthesis. Cell wall formation. Catalyzes the transfer of a GlcNAc subunit on undecaprenyl-pyrophosphoryl-MurNAc-pentapeptide (lipid intermediate I) to form undecaprenyl-pyrophosphoryl-MurNAc-(pentapeptide)GlcNAc (lipid intermediate II). The protein is UDP-N-acetylglucosamine--N-acetylmuramyl-(pentapeptide) pyrophosphoryl-undecaprenol N-acetylglucosamine transferase of Synechococcus sp. (strain CC9311).